Reading from the N-terminus, the 497-residue chain is Glycerol kinase (497 aa).

An ADP-binding site is contributed by T21. Residues T21 and T22 each coordinate ATP. Position 21 (T21) interacts with sn-glycerol 3-phosphate. ADP is bound at residue R25. Sn-glycerol 3-phosphate contacts are provided by R88, E89, Y140, and D244. Glycerol contacts are provided by R88, E89, Y140, D244, and Q245. Residues T266 and G309 each contribute to the ADP site. T266, G309, Q313, and G410 together coordinate ATP. Residues G410 and N414 each contribute to the ADP site.

It belongs to the FGGY kinase family.

The enzyme catalyses glycerol + ATP = sn-glycerol 3-phosphate + ADP + H(+). It functions in the pathway polyol metabolism; glycerol degradation via glycerol kinase pathway; sn-glycerol 3-phosphate from glycerol: step 1/1. Inhibited by fructose 1,6-bisphosphate (FBP). In terms of biological role, key enzyme in the regulation of glycerol uptake and metabolism. Catalyzes the phosphorylation of glycerol to yield sn-glycerol 3-phosphate. The chain is Glycerol kinase from Gloeobacter violaceus (strain ATCC 29082 / PCC 7421).